We begin with the raw amino-acid sequence, 108 residues long: Probable endonuclease 4 (108 aa).

Zn(2+)-binding residues include H2, H36, D49, H51, and E81.

The protein belongs to the AP endonuclease 2 family. Requires Zn(2+) as cofactor.

The catalysed reaction is Endonucleolytic cleavage to 5'-phosphooligonucleotide end-products.. Its function is as follows. Endonuclease IV plays a role in DNA repair. It cleaves phosphodiester bonds at apurinic or apyrimidinic (AP) sites, generating a 3'-hydroxyl group and a 5'-terminal sugar phosphate. This chain is Probable endonuclease 4 (nfo), found in Thermotoga neapolitana.